The chain runs to 232 residues: Large ribosomal subunit protein uL1 (232 aa).

The protein belongs to the universal ribosomal protein uL1 family. As to quaternary structure, part of the 50S ribosomal subunit.

Binds directly to 23S rRNA. The L1 stalk is quite mobile in the ribosome, and is involved in E site tRNA release. Functionally, protein L1 is also a translational repressor protein, it controls the translation of the L11 operon by binding to its mRNA. The protein is Large ribosomal subunit protein uL1 of Dinoroseobacter shibae (strain DSM 16493 / NCIMB 14021 / DFL 12).